We begin with the raw amino-acid sequence, 389 residues long: MGTNLSVPNPLGFFPDHQLDPAFGANSTNPDWDFNPIKDHWPQANQVGVGAFGPGHSPPHGGVLGWSPQAQGILTTVPTVPPTASTNRQSGRQPTPISPPLRDSHPQAMQWNSTALHQALQDPRVRGLYFPAGGSSSGTLNPVPNTASHISSISSRTGDPALNMENITSGFLGPLLVLQAGFFLLTRILTIPQSLDSWWTSLNFLGGSPVCLGQNSQYPTSNHSPTSCPPICPGYRWMCLRRFIIFLFILLLCLIFLLVLLDYQGMLPVCPLIPGSTTTSTGPCKTCTTPAQGNSMFPSCCCTKPTDGNCTCIPIPSSWAFAKYLWEWASVRFSWLSLLVPFVQWFVGLSPTVWLSVIWMMWYWGPSLYNIVSPFIPLLPIFFCLWVYI.

M1 carries the N-acetylmethionine modification. Residue G2 is the site of N-myristoyl glycine; by host attachment. The interval 2–108 is pre-S1; sequence GTNLSVPNPL…PPLRDSHPQA (107 aa). The tract at residues 2–163 is pre-S; sequence GTNLSVPNPL…SSRTGDPALN (162 aa). Over 2-170 the chain is Virion surface; in external conformation; that stretch reads GTNLSVPNPL…ALNMENITSG (169 aa). Topologically, residues 2-242 are intravirion; in internal conformation; that stretch reads GTNLSVPNPL…PGYRWMCLRR (241 aa). Positions 79–103 are disordered; that stretch reads TVPPTASTNRQSGRQPTPISPPLRD. Residues 84–95 are compositionally biased toward polar residues; it reads ASTNRQSGRQPT. Residues 109–163 form a pre-S2 region; sequence MQWNSTALHQALQDPRVRGLYFPAGGSSSGTLNPVPNTASHISSISSRTGDPALN. The helical transmembrane segment at 171–191 threads the bilayer; the sequence is FLGPLLVLQAGFFLLTRILTI. The Intravirion; in external conformation segment spans residues 192–242; that stretch reads PQSLDSWWTSLNFLGGSPVCLGQNSQYPTSNHSPTSCPPICPGYRWMCLRR. The helical transmembrane segment at 243–263 threads the bilayer; sequence FIIFLFILLLCLIFLLVLLDY. Residues 264–337 lie on the Virion surface side of the membrane; it reads QGMLPVCPLI…WASVRFSWLS (74 aa). A glycan (N-linked (GlcNAc...) asparagine; by host) is linked at N309. Residues 338-358 traverse the membrane as a helical segment; sequence LLVPFVQWFVGLSPTVWLSVI. Topologically, residues 359-364 are intravirion; sequence WMMWYW. Residues 365–387 form a helical membrane-spanning segment; that stretch reads GPSLYNIVSPFIPLLPIFFCLWV. Topologically, residues 388–389 are virion surface; the sequence is YI.

The protein belongs to the orthohepadnavirus major surface antigen family. In its internal form (Li-HBsAg), interacts with the capsid protein and with the isoform S. Interacts with host chaperone CANX. As to quaternary structure, associates with host chaperone CANX through its pre-S2 N glycan; this association may be essential for isoform M proper secretion. In terms of assembly, interacts with isoform L. Interacts with the antigens of satellite virus HDV (HDVAgs); this interaction is required for encapsidation of HDV genomic RNA. Isoform M is N-terminally acetylated by host at a ratio of 90%, and N-glycosylated by host at the pre-S2 region. Post-translationally, myristoylated.

The protein localises to the virion membrane. Functionally, the large envelope protein exists in two topological conformations, one which is termed 'external' or Le-HBsAg and the other 'internal' or Li-HBsAg. In its external conformation the protein attaches the virus to cell receptors and thereby initiating infection. This interaction determines the species specificity and liver tropism. This attachment induces virion internalization predominantly through caveolin-mediated endocytosis. The large envelope protein also assures fusion between virion membrane and endosomal membrane. In its internal conformation the protein plays a role in virion morphogenesis and mediates the contact with the nucleocapsid like a matrix protein. Its function is as follows. The middle envelope protein plays an important role in the budding of the virion. It is involved in the induction of budding in a nucleocapsid independent way. In this process the majority of envelope proteins bud to form subviral lipoprotein particles of 22 nm of diameter that do not contain a nucleocapsid. In Hepatitis B virus genotype A1 subtype adw2 (isolate South Africa/84/2001) (HBV-A), this protein is Large envelope protein.